The sequence spans 751 residues: Photosystem I P700 chlorophyll a apoprotein A1 (751 aa).

Helical transmembrane passes span Val-73–Ala-96, Leu-159–His-182, Met-198–Leu-222, Glu-294–Tyr-312, Trp-349–Tyr-372, Leu-388–Val-414, Ala-436–His-458, and Phe-533–Leu-551. Positions 575 and 584 each coordinate [4Fe-4S] cluster. A run of 2 helical transmembrane segments spans residues His-591–Trp-612 and Leu-665–Phe-687. His-676 is a binding site for chlorophyll a'. Positions 684 and 692 each coordinate chlorophyll a. Phylloquinone is bound at residue Trp-693. Residues Ala-725–Ala-745 form a helical membrane-spanning segment.

This sequence belongs to the PsaA/PsaB family. As to quaternary structure, the PsaA/B heterodimer binds the P700 chlorophyll special pair and subsequent electron acceptors. PSI consists of a core antenna complex that captures photons, and an electron transfer chain that converts photonic excitation into a charge separation. The eukaryotic PSI reaction center is composed of at least 11 subunits. Requires P700 is a chlorophyll a/chlorophyll a' dimer, A0 is one or more chlorophyll a, A1 is one or both phylloquinones and FX is a shared 4Fe-4S iron-sulfur center. as cofactor.

The protein resides in the plastid. The protein localises to the chloroplast thylakoid membrane. The enzyme catalyses reduced [plastocyanin] + hnu + oxidized [2Fe-2S]-[ferredoxin] = oxidized [plastocyanin] + reduced [2Fe-2S]-[ferredoxin]. PsaA and PsaB bind P700, the primary electron donor of photosystem I (PSI), as well as the electron acceptors A0, A1 and FX. PSI is a plastocyanin/cytochrome c6-ferredoxin oxidoreductase, converting photonic excitation into a charge separation, which transfers an electron from the donor P700 chlorophyll pair to the spectroscopically characterized acceptors A0, A1, FX, FA and FB in turn. Oxidized P700 is reduced on the lumenal side of the thylakoid membrane by plastocyanin or cytochrome c6. This chain is Photosystem I P700 chlorophyll a apoprotein A1, found in Oltmannsiellopsis viridis (Marine flagellate).